Consider the following 427-residue polypeptide: Enolase (427 aa).

Residue Gln-163 participates in (2R)-2-phosphoglycerate binding. Glu-205 serves as the catalytic Proton donor. The Mg(2+) site is built by Asp-242, Glu-285, and Asp-312. Residues Lys-337, Arg-366, Ser-367, and Lys-388 each contribute to the (2R)-2-phosphoglycerate site. The active-site Proton acceptor is Lys-337.

This sequence belongs to the enolase family. Mg(2+) serves as cofactor.

Its subcellular location is the cytoplasm. The protein localises to the secreted. It is found in the cell surface. It carries out the reaction (2R)-2-phosphoglycerate = phosphoenolpyruvate + H2O. Its pathway is carbohydrate degradation; glycolysis; pyruvate from D-glyceraldehyde 3-phosphate: step 4/5. In terms of biological role, catalyzes the reversible conversion of 2-phosphoglycerate (2-PG) into phosphoenolpyruvate (PEP). It is essential for the degradation of carbohydrates via glycolysis. This is Enolase from Rhodopseudomonas palustris (strain BisA53).